The primary structure comprises 152 residues: MAITYSSKPSKQRKALFNMPLHLRHKLFNAPLSKELREKYGVKKLPVRKGDVVRIMRGDWKGHEGKVVRIDLRRVRLYVEGVQRKKADQTPVYYPIHPSKVMIIKLDLSDKWRRKIIERRKGLIESEVVEEKETSKTSEGGGKTIEETEGEK.

Residues 128 to 152 (VVEEKETSKTSEGGGKTIEETEGEK) form a disordered region.

The protein belongs to the universal ribosomal protein uL24 family. In terms of assembly, part of the 50S ribosomal subunit.

One of two assembly initiator proteins, it binds directly to the 5'-end of the 23S rRNA, where it nucleates assembly of the 50S subunit. Functionally, located at the polypeptide exit tunnel on the outside of the subunit. In Staphylothermus marinus (strain ATCC 43588 / DSM 3639 / JCM 9404 / F1), this protein is Large ribosomal subunit protein uL24.